The chain runs to 267 residues: Probable proteasome subunit beta type-2 (267 aa).

The propeptide at 1–35 (MMGINERKGFDFEYYQRNLLLQEKGFPTPKATSTG) is removed in mature form. Residue Thr-36 is the Nucleophile of the active site.

Belongs to the peptidase T1B family. As to quaternary structure, the 26S proteasome consists of a 20S proteasome core and two 19S regulatory subunits. The 20S proteasome core is composed of 28 subunits that are arranged in four stacked rings, resulting in a barrel-shaped structure. The two end rings are each formed by seven alpha subunits, and the two central rings are each formed by seven beta subunits. The catalytic chamber with the active sites is on the inside of the barrel.

The protein localises to the cytoplasm. It localises to the nucleus. It carries out the reaction Cleavage of peptide bonds with very broad specificity.. Functionally, the proteasome is a multicatalytic proteinase complex which is characterized by its ability to cleave peptides with Arg, Phe, Tyr, Leu, and Glu adjacent to the leaving group at neutral or slightly basic pH. The proteasome has an ATP-dependent proteolytic activity (Potential). The chain is Probable proteasome subunit beta type-2 (pup1) from Schizosaccharomyces pombe (strain 972 / ATCC 24843) (Fission yeast).